The chain runs to 85 residues: ATP synthase subunit c (85 aa).

2 helical membrane-spanning segments follow: residues 1–21 (MLAW…ALVG) and 53–73 (LLFA…VALI).

This sequence belongs to the ATPase C chain family. F-type ATPases have 2 components, F(1) - the catalytic core - and F(0) - the membrane proton channel. F(1) has five subunits: alpha(3), beta(3), gamma(1), delta(1), epsilon(1). F(0) has three main subunits: a(1), b(2) and c(10-14). The alpha and beta chains form an alternating ring which encloses part of the gamma chain. F(1) is attached to F(0) by a central stalk formed by the gamma and epsilon chains, while a peripheral stalk is formed by the delta and b chains.

The protein resides in the cell inner membrane. In terms of biological role, f(1)F(0) ATP synthase produces ATP from ADP in the presence of a proton or sodium gradient. F-type ATPases consist of two structural domains, F(1) containing the extramembraneous catalytic core and F(0) containing the membrane proton channel, linked together by a central stalk and a peripheral stalk. During catalysis, ATP synthesis in the catalytic domain of F(1) is coupled via a rotary mechanism of the central stalk subunits to proton translocation. Its function is as follows. Key component of the F(0) channel; it plays a direct role in translocation across the membrane. A homomeric c-ring of between 10-14 subunits forms the central stalk rotor element with the F(1) delta and epsilon subunits. The chain is ATP synthase subunit c from Dictyoglomus turgidum (strain DSM 6724 / Z-1310).